A 177-amino-acid polypeptide reads, in one-letter code: Large ribosomal subunit protein uL6 (177 aa).

Belongs to the universal ribosomal protein uL6 family. Part of the 50S ribosomal subunit.

Its function is as follows. This protein binds to the 23S rRNA, and is important in its secondary structure. It is located near the subunit interface in the base of the L7/L12 stalk, and near the tRNA binding site of the peptidyltransferase center. This is Large ribosomal subunit protein uL6 from Aliivibrio fischeri (strain MJ11) (Vibrio fischeri).